Here is a 616-residue protein sequence, read N- to C-terminus: Homeodomain-interacting protein kinase 4 (616 aa).

The Protein kinase domain maps to 11-347 (YDIIEVLGKG…PSAALRHPFV (337 aa)). ATP contacts are provided by residues 17–25 (LGKGTFGEV) and lysine 40. Residue aspartate 136 is the Proton acceptor of the active site. The interval 485 to 616 (RHKARKPPAG…SFLQHVTGHH (132 aa)) is disordered. Residues 496 to 511 (KSDSNLSNLIRLSQVS) show a composition bias toward polar residues. At serine 511 the chain carries Phosphoserine.

This sequence belongs to the protein kinase superfamily. CMGC Ser/Thr protein kinase family. HIPK subfamily. In terms of processing, autophosphorylated.

Its subcellular location is the cytoplasm. It carries out the reaction L-seryl-[protein] + ATP = O-phospho-L-seryl-[protein] + ADP + H(+). It catalyses the reaction L-threonyl-[protein] + ATP = O-phospho-L-threonyl-[protein] + ADP + H(+). Protein kinase that phosphorylates TP53, and thus induces TP53 repression of BIRC5 promoter. May act as a corepressor of transcription factors (Potential). This chain is Homeodomain-interacting protein kinase 4 (HIPK4), found in Macaca fascicularis (Crab-eating macaque).